The chain runs to 275 residues: D-apionate oxidoisomerase (275 aa).

NAD(+)-binding positions include 11–13 (GKM), Glu32, and Asp68. Zn(2+)-binding residues include His113 and Glu183.

The protein belongs to the ApnO family. Zn(2+) is required as a cofactor.

The catalysed reaction is D-apionate + NAD(+) = 3-oxoisoapionate + NADH + H(+). It participates in carbohydrate metabolism. Involved in catabolism of D-apiose. Catalyzes the conversion of D-apionate to 3-oxo-isoapionate. This is D-apionate oxidoisomerase from Rhizobium rhizogenes (strain K84 / ATCC BAA-868) (Agrobacterium radiobacter).